The sequence spans 199 residues: Recombination protein RecR (199 aa).

The segment at 57–72 (CQSCRTYTEESLCPIC) adopts a C4-type zinc-finger fold. The Toprim domain occupies 81 to 176 (STICVVETPA…VISRIAHGVP (96 aa)).

This sequence belongs to the RecR family.

May play a role in DNA repair. It seems to be involved in an RecBC-independent recombinational process of DNA repair. It may act with RecF and RecO. This Shewanella sp. (strain ANA-3) protein is Recombination protein RecR.